A 461-amino-acid polypeptide reads, in one-letter code: Alkaline phosphatase 4 (461 aa).

The signal sequence occupies residues 1 to 41 (MKKMSLFQNMKSKLLPIAAVSVLTAGIFAGAELQQTEKASA). Asp-58 contributes to the Mg(2+) binding site. Asp-58 provides a ligand contact to Zn(2+). Ser-108 functions as the Phosphoserine intermediate in the catalytic mechanism. Mg(2+)-binding residues include Thr-161 and Glu-282. Asp-287, His-291, Asp-329, His-330, and His-423 together coordinate Zn(2+).

This sequence belongs to the alkaline phosphatase family. As to quaternary structure, monomer. Requires Mg(2+) as cofactor. Zn(2+) is required as a cofactor.

It carries out the reaction a phosphate monoester + H2O = an alcohol + phosphate. The chain is Alkaline phosphatase 4 (phoA) from Bacillus subtilis (strain 168).